The following is a 370-amino-acid chain: Chaperone protein DnaJ (370 aa).

In terms of domain architecture, J spans Asp4 to Gly68. The CR-type zinc-finger motif lies at Gly133–Gln211. The Zn(2+) site is built by Cys146, Cys149, Cys163, Cys166, Cys185, Cys188, Cys199, and Cys202. 4 CXXCXGXG motif repeats span residues Cys146 to Gly153, Cys163 to Gly170, Cys185 to Gly192, and Cys199 to Gly206.

It belongs to the DnaJ family. Homodimer. Requires Zn(2+) as cofactor.

The protein resides in the cytoplasm. Its function is as follows. Participates actively in the response to hyperosmotic and heat shock by preventing the aggregation of stress-denatured proteins and by disaggregating proteins, also in an autonomous, DnaK-independent fashion. Unfolded proteins bind initially to DnaJ; upon interaction with the DnaJ-bound protein, DnaK hydrolyzes its bound ATP, resulting in the formation of a stable complex. GrpE releases ADP from DnaK; ATP binding to DnaK triggers the release of the substrate protein, thus completing the reaction cycle. Several rounds of ATP-dependent interactions between DnaJ, DnaK and GrpE are required for fully efficient folding. Also involved, together with DnaK and GrpE, in the DNA replication of plasmids through activation of initiation proteins. The protein is Chaperone protein DnaJ of Rickettsia prowazekii (strain Madrid E).